We begin with the raw amino-acid sequence, 214 residues long: 3,4-dihydroxy-2-butanone 4-phosphate synthase (214 aa).

Residues 37 to 38 (RE), aspartate 42, 150 to 154 (RPGHT), and glutamate 174 each bind D-ribulose 5-phosphate. Mg(2+) is bound at residue glutamate 38. Residue histidine 153 participates in Mg(2+) binding.

The protein belongs to the DHBP synthase family. Homodimer. Mg(2+) serves as cofactor. It depends on Mn(2+) as a cofactor.

The enzyme catalyses D-ribulose 5-phosphate = (2S)-2-hydroxy-3-oxobutyl phosphate + formate + H(+). The protein operates within cofactor biosynthesis; riboflavin biosynthesis; 2-hydroxy-3-oxobutyl phosphate from D-ribulose 5-phosphate: step 1/1. Catalyzes the conversion of D-ribulose 5-phosphate to formate and 3,4-dihydroxy-2-butanone 4-phosphate. This is 3,4-dihydroxy-2-butanone 4-phosphate synthase from Mannheimia succiniciproducens (strain KCTC 0769BP / MBEL55E).